The following is a 51-amino-acid chain: Sperm protamine P1 (51 aa).

Intrachain disulfides connect cysteine 7–cysteine 15 and cysteine 38–cysteine 48.

It belongs to the protamine P1 family. In terms of assembly, cross-linked by interchain disulfide bonds around the DNA-helix. Phosphorylated by SRPK1. In terms of tissue distribution, testis.

The protein resides in the nucleus. The protein localises to the chromosome. Functionally, protamines substitute for histones in the chromatin of sperm during the haploid phase of spermatogenesis. They compact sperm DNA into a highly condensed, stable and inactive complex. This chain is Sperm protamine P1 (Prm1), found in Mus musculus (Mouse).